The sequence spans 599 residues: Elongation factor 4 (599 aa).

Residues 2 to 184 (KHIRNFSIIA…RLVRDIPPPE (183 aa)) enclose the tr-type G domain. Residues 14-19 (DHGKST) and 131-134 (NKID) contribute to the GTP site.

It belongs to the TRAFAC class translation factor GTPase superfamily. Classic translation factor GTPase family. LepA subfamily.

Its subcellular location is the cell inner membrane. It carries out the reaction GTP + H2O = GDP + phosphate + H(+). Functionally, required for accurate and efficient protein synthesis under certain stress conditions. May act as a fidelity factor of the translation reaction, by catalyzing a one-codon backward translocation of tRNAs on improperly translocated ribosomes. Back-translocation proceeds from a post-translocation (POST) complex to a pre-translocation (PRE) complex, thus giving elongation factor G a second chance to translocate the tRNAs correctly. Binds to ribosomes in a GTP-dependent manner. The protein is Elongation factor 4 of Pectobacterium carotovorum subsp. carotovorum (strain PC1).